A 146-amino-acid polypeptide reads, in one-letter code: Histone H2A.1 (146 aa).

Met1 is subject to N-acetylmethionine. Residues 1 to 24 form a disordered region; the sequence is MDATKTTKGAGGRKGGPRKKSVTK. An SPKK motif motif is present at residues 142–145; the sequence is SPKK.

The protein belongs to the histone H2A family. As to quaternary structure, the nucleosome is a histone octamer containing two molecules each of H2A, H2B, H3 and H4 assembled in one H3-H4 heterotetramer and two H2A-H2B heterodimers. The octamer wraps approximately 147 bp of DNA. High expression in meristematic tissues, in cells of the root pericycle and in shoot cortical cells undergoing endoduplication of their DNA.

The protein localises to the nucleus. It localises to the chromosome. In terms of biological role, core component of nucleosome. Nucleosomes wrap and compact DNA into chromatin, limiting DNA accessibility to the cellular machineries which require DNA as a template. Histones thereby play a central role in transcription regulation, DNA repair, DNA replication and chromosomal stability. DNA accessibility is regulated via a complex set of post-translational modifications of histones, also called histone code, and nucleosome remodeling. The polypeptide is Histone H2A.1 (Solanum lycopersicum (Tomato)).